Reading from the N-terminus, the 257-residue chain is uncharacterized protein (257 aa).

Residues 1-22 (MIHSKRLKMCLCLIILSVFIGA) form the signal peptide. Cys23 is lipidated: N-palmitoyl cysteine. Cys23 carries the S-diacylglycerol cysteine lipid modification.

Belongs to the staphylococcal tandem lipoprotein family.

Its subcellular location is the cell membrane. This is an uncharacterized protein from Staphylococcus aureus (strain MRSA252).